Here is a 473-residue protein sequence, read N- to C-terminus: Phosphoglucosamine mutase (473 aa).

Catalysis depends on serine 102, which acts as the Phosphoserine intermediate. Mg(2+) is bound by residues serine 102, aspartate 248, aspartate 250, and aspartate 252. Serine 102 carries the post-translational modification Phosphoserine.

The protein belongs to the phosphohexose mutase family. It depends on Mg(2+) as a cofactor. In terms of processing, activated by phosphorylation.

It carries out the reaction alpha-D-glucosamine 1-phosphate = D-glucosamine 6-phosphate. Functionally, catalyzes the conversion of glucosamine-6-phosphate to glucosamine-1-phosphate. The protein is Phosphoglucosamine mutase of Rhodospirillum centenum (strain ATCC 51521 / SW).